The following is a 466-amino-acid chain: ATP synthase subunit beta (466 aa).

155-162 serves as a coordination point for ATP; it reads GGAGVGKT.

The protein belongs to the ATPase alpha/beta chains family. In terms of assembly, F-type ATPases have 2 components, CF(1) - the catalytic core - and CF(0) - the membrane proton channel. CF(1) has five subunits: alpha(3), beta(3), gamma(1), delta(1), epsilon(1). CF(0) has three main subunits: a(1), b(2) and c(9-12). The alpha and beta chains form an alternating ring which encloses part of the gamma chain. CF(1) is attached to CF(0) by a central stalk formed by the gamma and epsilon chains, while a peripheral stalk is formed by the delta and b chains.

Its subcellular location is the cell inner membrane. It carries out the reaction ATP + H2O + 4 H(+)(in) = ADP + phosphate + 5 H(+)(out). Its function is as follows. Produces ATP from ADP in the presence of a proton gradient across the membrane. The catalytic sites are hosted primarily by the beta subunits. The protein is ATP synthase subunit beta of Bordetella bronchiseptica (strain ATCC BAA-588 / NCTC 13252 / RB50) (Alcaligenes bronchisepticus).